We begin with the raw amino-acid sequence, 326 residues long: Transposase InsH for insertion sequence element IS5A (326 aa).

This sequence belongs to the transposase 11 family.

In terms of biological role, involved in the transposition of the insertion sequence IS5. The sequence is that of Transposase InsH for insertion sequence element IS5A (insH1) from Escherichia coli (strain K12).